Consider the following 296-residue polypeptide: Putative S-adenosyl-L-methionine-dependent methyltransferase MAV_4764 (296 aa).

Residues Asp121 and Asp150–Leu151 each bind S-adenosyl-L-methionine.

It belongs to the UPF0677 family.

Exhibits S-adenosyl-L-methionine-dependent methyltransferase activity. The chain is Putative S-adenosyl-L-methionine-dependent methyltransferase MAV_4764 from Mycobacterium avium (strain 104).